Reading from the N-terminus, the 157-residue chain is 2-C-methyl-D-erythritol 2,4-cyclodiphosphate synthase (157 aa).

A divalent metal cation is bound by residues Asp8 and His10. Residues 8–10 (DVH) and 34–35 (HS) contribute to the 4-CDP-2-C-methyl-D-erythritol 2-phosphate site. His42 is an a divalent metal cation binding site. Residues 56 to 58 (DLG), 61 to 65 (FPDTD), 132 to 135 (TTTE), Phe139, and Arg142 contribute to the 4-CDP-2-C-methyl-D-erythritol 2-phosphate site.

Belongs to the IspF family. Homotrimer. A divalent metal cation is required as a cofactor.

The enzyme catalyses 4-CDP-2-C-methyl-D-erythritol 2-phosphate = 2-C-methyl-D-erythritol 2,4-cyclic diphosphate + CMP. It functions in the pathway isoprenoid biosynthesis; isopentenyl diphosphate biosynthesis via DXP pathway; isopentenyl diphosphate from 1-deoxy-D-xylulose 5-phosphate: step 4/6. In terms of biological role, involved in the biosynthesis of isopentenyl diphosphate (IPP) and dimethylallyl diphosphate (DMAPP), two major building blocks of isoprenoid compounds. Catalyzes the conversion of 4-diphosphocytidyl-2-C-methyl-D-erythritol 2-phosphate (CDP-ME2P) to 2-C-methyl-D-erythritol 2,4-cyclodiphosphate (ME-CPP) with a corresponding release of cytidine 5-monophosphate (CMP). The sequence is that of 2-C-methyl-D-erythritol 2,4-cyclodiphosphate synthase from Salinibacter ruber (strain DSM 13855 / M31).